The chain runs to 525 residues: MAHDIHAHRILILDFGSQYTQLIARRVREIGVYCELHPWDMSDEDIRAFAPRGIILAGGPESVHEANSPRAPQAVFDLNVPVLGICYGMQTMAEQLGGKVEGSDLREFGYARVDVVGKSQLLAGIEDHVDADGVFGLDVWMSHGDKVTRLPEGFHILASTPSCPIAAMSDDTRHYYGVQFHPEVTHTKQGGRILSRFVLEISGCEALWTPANIVEDAVAAVRAQVGDANVLLGLSGGVDSSVVAALLHKAIGDQLTCVFVDNGLLRLHEGDQVMAMFAENMGVKVIRANAEEQFLSNLAGESDPEKKRKIIGRTFIDVFDAEASKLDNIQFLAQGTIYPDVIESAGAKSGKAHVIKSHHNVGGLPEEMNLKLVEPLRELFKDEVRKIGLELGLPYDMVYRHPFPGPGLGVRILGEVKKEYADLLRRADHIFIEELRKADWYHKTSQAFVVFQPVKSVGVVGDGRRYAWVVALRAVETVDFMTARWAHLPYELLETVSGRIINEIEGISRVTYDVSSKPPATIEWE.

Positions 9–207 (RILILDFGSQ…VLEISGCEAL (199 aa)) constitute a Glutamine amidotransferase type-1 domain. Cys-86 functions as the Nucleophile in the catalytic mechanism. Catalysis depends on residues His-181 and Glu-183. The 193-residue stretch at 208 to 400 (WTPANIVEDA…LGLPYDMVYR (193 aa)) folds into the GMPS ATP-PPase domain. 235–241 (SGGVDSS) lines the ATP pocket.

In terms of assembly, homodimer.

The enzyme catalyses XMP + L-glutamine + ATP + H2O = GMP + L-glutamate + AMP + diphosphate + 2 H(+). The protein operates within purine metabolism; GMP biosynthesis; GMP from XMP (L-Gln route): step 1/1. Catalyzes the synthesis of GMP from XMP. The protein is GMP synthase [glutamine-hydrolyzing] of Ectopseudomonas mendocina (strain ymp) (Pseudomonas mendocina).